A 339-amino-acid chain; its full sequence is Ketol-acid reductoisomerase (NADP(+)) (339 aa).

Residues 1 to 182 enclose the KARI N-terminal Rossmann domain; that stretch reads MRVYYDRDAD…GGGRSGIIET (182 aa). Residues 24-27, Lys-48, Ser-51, Thr-53, and 83-86 each bind NADP(+); these read YGSQ and DELQ. His-108 is an active-site residue. Gly-134 contacts NADP(+). A KARI C-terminal knotted domain is found at 183–328; sequence NFREECETDL…AKLRGMMPWI (146 aa). The Mg(2+) site is built by Asp-191, Glu-195, Glu-227, and Glu-231. Ser-252 is a binding site for substrate.

The protein belongs to the ketol-acid reductoisomerase family. Requires Mg(2+) as cofactor.

It carries out the reaction (2R)-2,3-dihydroxy-3-methylbutanoate + NADP(+) = (2S)-2-acetolactate + NADPH + H(+). It catalyses the reaction (2R,3R)-2,3-dihydroxy-3-methylpentanoate + NADP(+) = (S)-2-ethyl-2-hydroxy-3-oxobutanoate + NADPH + H(+). The protein operates within amino-acid biosynthesis; L-isoleucine biosynthesis; L-isoleucine from 2-oxobutanoate: step 2/4. Its pathway is amino-acid biosynthesis; L-valine biosynthesis; L-valine from pyruvate: step 2/4. Its function is as follows. Involved in the biosynthesis of branched-chain amino acids (BCAA). Catalyzes an alkyl-migration followed by a ketol-acid reduction of (S)-2-acetolactate (S2AL) to yield (R)-2,3-dihydroxy-isovalerate. In the isomerase reaction, S2AL is rearranged via a Mg-dependent methyl migration to produce 3-hydroxy-3-methyl-2-ketobutyrate (HMKB). In the reductase reaction, this 2-ketoacid undergoes a metal-dependent reduction by NADPH to yield (R)-2,3-dihydroxy-isovalerate. This is Ketol-acid reductoisomerase (NADP(+)) from Rhizobium johnstonii (strain DSM 114642 / LMG 32736 / 3841) (Rhizobium leguminosarum bv. viciae).